The primary structure comprises 679 residues: Glycine--tRNA ligase beta subunit (679 aa).

Belongs to the class-II aminoacyl-tRNA synthetase family. As to quaternary structure, tetramer of two alpha and two beta subunits.

The protein resides in the cytoplasm. The enzyme catalyses tRNA(Gly) + glycine + ATP = glycyl-tRNA(Gly) + AMP + diphosphate. This chain is Glycine--tRNA ligase beta subunit, found in Streptococcus mutans serotype c (strain ATCC 700610 / UA159).